Consider the following 490-residue polypeptide: Tryptophan 5-hydroxylase 2 (490 aa).

Serine 19 carries the post-translational modification Phosphoserine. The segment at leucine 34 to glycine 62 is disordered. Over residues lysine 50 to glycine 62 the composition is skewed to polar residues. The region spanning alanine 65 to asparagine 140 is the ACT domain. Fe cation-binding residues include histidine 318, histidine 323, and glutamate 363.

It belongs to the biopterin-dependent aromatic amino acid hydroxylase family. Interacts with DNAJC12. Fe(2+) is required as a cofactor.

The catalysed reaction is (6R)-L-erythro-5,6,7,8-tetrahydrobiopterin + L-tryptophan + O2 = 5-hydroxy-L-tryptophan + (4aS,6R)-4a-hydroxy-L-erythro-5,6,7,8-tetrahydrobiopterin. The protein operates within aromatic compound metabolism; serotonin biosynthesis; serotonin from L-tryptophan: step 1/2. The sequence is that of Tryptophan 5-hydroxylase 2 (TPH2) from Macaca mulatta (Rhesus macaque).